A 138-amino-acid chain; its full sequence is Acidic phospholipase A2 jerdoxin (138 aa).

The signal sequence occupies residues 1–16 (MRTLWIMAVLLVGVEG). Cystine bridges form between Cys42–Cys131, Cys44–Cys60, Cys59–Cys111, Cys65–Cys138, Cys66–Cys104, Cys73–Cys97, and Cys91–Cys102. Ca(2+) is bound by residues Tyr43, Gly45, and Gly47. His63 is a catalytic residue. Asp64 contributes to the Ca(2+) binding site. Residue Asp105 is part of the active site.

It belongs to the phospholipase A2 family. Group II subfamily. D49 sub-subfamily. In terms of assembly, monomer. Ca(2+) is required as a cofactor. As to expression, expressed by the venom gland.

The protein localises to the secreted. It carries out the reaction a 1,2-diacyl-sn-glycero-3-phosphocholine + H2O = a 1-acyl-sn-glycero-3-phosphocholine + a fatty acid + H(+). Functionally, snake venom phospholipase A2 (PLA2) that displays edema-inducing activities, exhibits indirect hemolytic activity, and inhibits ADP-induced platelet aggregation. PLA2 catalyzes the calcium-dependent hydrolysis of the 2-acyl groups in 3-sn-phosphoglycerides. This Protobothrops jerdonii (Jerdon's pitviper) protein is Acidic phospholipase A2 jerdoxin.